The primary structure comprises 267 residues: GTP cyclohydrolase MptA (267 aa).

The protein belongs to the GTP cyclohydrolase IV family. In terms of assembly, homodimer. It depends on Fe(2+) as a cofactor.

It catalyses the reaction GTP + H2O = 7,8-dihydroneopterin 2',3'-cyclic phosphate + formate + diphosphate + H(+). It participates in cofactor biosynthesis; 5,6,7,8-tetrahydromethanopterin biosynthesis. Its function is as follows. Converts GTP to 7,8-dihydro-D-neopterin 2',3'-cyclic phosphate, the first intermediate in the biosynthesis of coenzyme methanopterin. The polypeptide is GTP cyclohydrolase MptA (Pyrococcus furiosus (strain ATCC 43587 / DSM 3638 / JCM 8422 / Vc1)).